Consider the following 582-residue polypeptide: Hemagglutinin-neuraminidase (582 aa).

Residues 1–34 (MEPSKLFTMSDNATFAPGPVVNAADKKTFRTCFR) are Intravirion-facing. Residues 35–55 (ILVLSVQAVTLILVIVTLGEL) traverse the membrane as a helical segment. At 56–582 (VRMINDQGLS…LPVLTRLTIT (527 aa)) the chain is on the virion surface side. 3 cysteine pairs are disulfide-bonded: C178-C202, C192-C253, and C244-C257. 2 N-linked (GlcNAc...) asparagine; by host glycosylation sites follow: N284 and N329. 3 disulfide bridges follow: C350/C471, C382/C392, and C465/C475. N-linked (GlcNAc...) asparagine; by host glycosylation is found at N400 and N448. N507 carries an N-linked (GlcNAc...) asparagine; by host glycan. C545 and C556 are disulfide-bonded.

It belongs to the paramyxoviruses hemagglutinin-neuraminidase family. Homotetramer; composed of disulfide-linked homodimers. Interacts with F protein trimer.

The protein resides in the virion membrane. Its subcellular location is the host cell membrane. The catalysed reaction is Hydrolysis of alpha-(2-&gt;3)-, alpha-(2-&gt;6)-, alpha-(2-&gt;8)- glycosidic linkages of terminal sialic acid residues in oligosaccharides, glycoproteins, glycolipids, colominic acid and synthetic substrates.. Its function is as follows. Attaches the virus to alpha-2,3-linked sialic acid-containing cell receptors and thereby initiating infection. Binding of HN protein to the receptor induces a conformational change that allows the F protein to trigger virion/cell membranes fusion. Binds to the glycan motifs sialyl Lewis (SLe) and GM2 ganglioside (GM2-glycan). Functionally, neuraminidase activity ensures the efficient spread of the virus by dissociating the mature virions from the neuraminic acid containing glycoproteins. This chain is Hemagglutinin-neuraminidase, found in Mumps orthorubulavirus (MuV).